The chain runs to 289 residues: Phosphoribulokinase (289 aa).

12–20 (GSSGAGTTT) serves as a coordination point for ATP.

This sequence belongs to the phosphoribulokinase family.

It carries out the reaction D-ribulose 5-phosphate + ATP = D-ribulose 1,5-bisphosphate + ADP + H(+). It functions in the pathway carbohydrate biosynthesis; Calvin cycle. In Rhizobium meliloti (strain 1021) (Ensifer meliloti), this protein is Phosphoribulokinase (cbbP).